The following is a 138-amino-acid chain: Class I hydrophobin 1 (138 aa).

Residues 1-19 (MRFSAATVSALAMALTVAA) form the signal peptide. Intrachain disulfides connect C45–C113, C53–C107, C54–C91, and C114–C131.

This sequence belongs to the fungal hydrophobin family. Interacts with the lipid droplet coating protein Cap20.

The protein resides in the secreted. It localises to the lipid droplet. Functionally, aerial growth, conidiation, and dispersal of filamentous fungi in the environment rely upon a capability of their secreting small amphipathic proteins called hydrophobins (HPBs) with low sequence identity. Class I can self-assemble into an outermost layer of rodlet bundles on aerial cell surfaces, conferring cellular hydrophobicity that supports fungal growth, development and dispersal; whereas Class II form highly ordered films at water-air interfaces through intermolecular interactions but contribute nothing to the rodlet structure. Hydr1 is a class I hydrophobin involved in spore germination, appressorium formation, but not in the formation of the rodlet layer of conidia. Responsible for the full virulence on rubber tree leaves. This chain is Class I hydrophobin 1, found in Colletotrichum siamense (Anthracnose fungus).